A 250-amino-acid chain; its full sequence is Shieldin complex subunit 3 (250 aa).

Positions 28 to 83 (QDFPTRPLSRFIPWFPYDGSKLPLRPKRSPPVISEEAAEDVKQYLTISEHDAKSHS) are sufficient for interaction with MAD2L2. Residues 108–119 (LKEQTNSGNLGK) are compositionally biased toward polar residues. A disordered region spans residues 108–129 (LKEQTNSGNLGKQSEKGKQHKR).

In terms of assembly, component of the shieldin complex, consisting of SHLD1, SHLD2, SHLD3 and MAD2L2/REV7. Within the complex, SHLD2 forms a scaffold which interacts with a SHLD3-MAD2L2 subcomplex via its N-terminus, and with SHLD1 via its C-terminus. Interacts with ASTE1.

The protein resides in the chromosome. Functionally, component of the shieldin complex, which plays an important role in repair of DNA double-stranded breaks (DSBs). During G1 and S phase of the cell cycle, the complex functions downstream of TP53BP1 to promote non-homologous end joining (NHEJ) and suppress DNA end resection. Mediates various NHEJ-dependent processes including immunoglobulin class-switch recombination, and fusion of unprotected telomeres. This chain is Shieldin complex subunit 3, found in Homo sapiens (Human).